The primary structure comprises 317 residues: L-lactate dehydrogenase 1 (317 aa).

Residues Val17, Asp38, Lys43, Tyr69, and 83-84 (GA) each bind NAD(+). Substrate is bound by residues Gln86 and Arg92. Residues Ser105, 122-124 (ATN), and Ser147 each bind NAD(+). 124–127 (NPVD) serves as a coordination point for substrate. A substrate-binding site is contributed by 152–155 (DSAR). The active-site Proton acceptor is the His179. At Tyr223 the chain carries Phosphotyrosine. Residue Thr232 coordinates substrate.

Belongs to the LDH/MDH superfamily. LDH family. As to quaternary structure, homotetramer.

The protein localises to the cytoplasm. The catalysed reaction is (S)-lactate + NAD(+) = pyruvate + NADH + H(+). Its pathway is fermentation; pyruvate fermentation to lactate; (S)-lactate from pyruvate: step 1/1. Functionally, catalyzes the conversion of lactate to pyruvate (Potential). Appears to be the primary factor that allows S.aureus growth during nitrosative stress in both aerobically and anaerobically cultured cells. The protein is L-lactate dehydrogenase 1 of Staphylococcus aureus (strain MRSA252).